Consider the following 253-residue polypeptide: MEVIPAIDILDGKCVRLYQGDYQQSQVFNDNPAIVAREWVNQGATRLHLVDLDGAKEGKSVNLSTIETILNDIAIPVQVGGGLRDLETVSNLLKIGVEKAILGTVAVEKPELVSELCQSFPGQIIVGIDARDGKVATRGWLETSEVEAIALGQDMAKRGASTIIYTDIHRDGTLSGPNLAALRELAESVEIPVIASGGISSLTDLLSLLSLEPLGVTGVIVGRALYTGAVNLSEAISAIGSGRWQDVPPNFFA.

D8 acts as the Proton acceptor in catalysis. The Proton donor role is filled by D129.

This sequence belongs to the HisA/HisF family.

It is found in the cytoplasm. The enzyme catalyses 1-(5-phospho-beta-D-ribosyl)-5-[(5-phospho-beta-D-ribosylamino)methylideneamino]imidazole-4-carboxamide = 5-[(5-phospho-1-deoxy-D-ribulos-1-ylimino)methylamino]-1-(5-phospho-beta-D-ribosyl)imidazole-4-carboxamide. It functions in the pathway amino-acid biosynthesis; L-histidine biosynthesis; L-histidine from 5-phospho-alpha-D-ribose 1-diphosphate: step 4/9. The sequence is that of 1-(5-phosphoribosyl)-5-[(5-phosphoribosylamino)methylideneamino] imidazole-4-carboxamide isomerase from Microcystis aeruginosa (strain NIES-843 / IAM M-2473).